A 349-amino-acid chain; its full sequence is uncharacterized protein (349 aa).

Residues 17–37 (VIAIVSTGLVFAMTLVLTGLV) traverse the membrane as a helical segment. Residues 111-131 (FGAPEHGPGMPRVSDGRAPST) are disordered. Helical transmembrane passes span 230-250 (AITV…GSVV), 284-304 (VVAL…APLF), and 308-328 (VVVP…IGLL).

It belongs to the ABC-4 integral membrane protein family.

The protein localises to the cell membrane. This is an uncharacterized protein from Mycobacterium bovis (strain ATCC BAA-935 / AF2122/97).